Here is a 195-residue protein sequence, read N- to C-terminus: 3-isopropylmalate dehydratase small subunit (195 aa).

Belongs to the LeuD family. LeuD type 1 subfamily. In terms of assembly, heterodimer of LeuC and LeuD.

The enzyme catalyses (2R,3S)-3-isopropylmalate = (2S)-2-isopropylmalate. It participates in amino-acid biosynthesis; L-leucine biosynthesis; L-leucine from 3-methyl-2-oxobutanoate: step 2/4. In terms of biological role, catalyzes the isomerization between 2-isopropylmalate and 3-isopropylmalate, via the formation of 2-isopropylmaleate. The polypeptide is 3-isopropylmalate dehydratase small subunit (Salinispora tropica (strain ATCC BAA-916 / DSM 44818 / JCM 13857 / NBRC 105044 / CNB-440)).